The following is a 356-amino-acid chain: Icosanoyl-CoA 5-desaturase (356 aa).

Residues 5-25 (LYFPISISLSLSLEAMASFIA) form a helical membrane-spanning segment. The interval 38 to 58 (LDPKIPTKPEPKTETPKPKDD) is disordered. Positions 42-58 (IPTKPEPKTETPKPKDD) are enriched in basic and acidic residues. The next 2 helical transmembrane spans lie at 88 to 108 (NAVT…YFSW) and 111 to 131 (FWIS…TLCF). The Histidine box-1 signature appears at 132 to 137 (HRCLTH). A Histidine box-2 motif is present at residues 169 to 173 (HRYHH). A helical membrane pass occupies residues 236–256 (ALIALLYYVGGFPYIVWGMGF). A Histidine box-3 motif is present at residues 302-306 (HNNHH).

This sequence belongs to the fatty acid desaturase type 1 family. Requires Fe(2+) as cofactor.

The protein localises to the membrane. It carries out the reaction eicosanoyl-CoA + 2 Fe(II)-[cytochrome b5] + O2 + 2 H(+) = (5Z)-eicosenoyl-CoA + 2 Fe(III)-[cytochrome b5] + 2 H2O. It participates in lipid metabolism; monounsaturated fatty acid biosynthesis. Functionally, desaturase involved in the biosynthesis of (5Z)-icos-5-enoate, an unusual monounsaturated fatty acid that makes up to 60% of the total fatty acids in Limnanthes sp. seed oil. Only acts on saturated fatty acids. This is Icosanoyl-CoA 5-desaturase from Limnanthes douglasii (Douglas' meadowfoam).